The sequence spans 117 residues: Galanin peptides (117 aa).

The signal sequence occupies residues Met1 to Ser19. Positions Glu20–Glu30 are excised as a propeptide. Thr61 bears the Threonine amide mark.

Belongs to the galanin family.

The protein resides in the secreted. Endocrine hormone of the central and peripheral nervous systems that binds and activates the G protein-coupled receptors GALR1, GALR2, and GALR3. This small neuropeptide may regulate diverse physiologic functions including contraction of smooth muscle of the gastrointestinal and genitourinary tract, growth hormone and insulin release and adrenal secretion. The chain is Galanin peptides (GAL) from Coturnix japonica (Japanese quail).